The chain runs to 124 residues: Small ribosomal subunit protein uS12 (124 aa).

Residues 1-28 form a disordered region; that stretch reads MPTISQLVGSERKRLTKKTKSPALKSCP. Residue Asp-89 is modified to 3-methylthioaspartic acid. Residues 104–124 are disordered; it reads TAGVKDRRQSRSKYGAKAPKD.

Belongs to the universal ribosomal protein uS12 family. In terms of assembly, part of the 30S ribosomal subunit. Contacts proteins S8 and S17. May interact with IF1 in the 30S initiation complex.

Functionally, with S4 and S5 plays an important role in translational accuracy. Its function is as follows. Interacts with and stabilizes bases of the 16S rRNA that are involved in tRNA selection in the A site and with the mRNA backbone. Located at the interface of the 30S and 50S subunits, it traverses the body of the 30S subunit contacting proteins on the other side and probably holding the rRNA structure together. The combined cluster of proteins S8, S12 and S17 appears to hold together the shoulder and platform of the 30S subunit. In Prochlorococcus marinus (strain MIT 9301), this protein is Small ribosomal subunit protein uS12.